The sequence spans 235 residues: Glucosamine-6-phosphate deaminase (235 aa).

Residue Asp-62 is the Proton acceptor; for enolization step of the active site. The active-site For ring-opening step is the Asn-128. Catalysis depends on His-130, which acts as the Proton acceptor; for ring-opening step. Glu-135 (for ring-opening step) is an active-site residue.

The protein belongs to the glucosamine/galactosamine-6-phosphate isomerase family. NagB subfamily.

It catalyses the reaction alpha-D-glucosamine 6-phosphate + H2O = beta-D-fructose 6-phosphate + NH4(+). It participates in amino-sugar metabolism; N-acetylneuraminate degradation; D-fructose 6-phosphate from N-acetylneuraminate: step 5/5. In terms of biological role, catalyzes the reversible isomerization-deamination of glucosamine 6-phosphate (GlcN6P) to form fructose 6-phosphate (Fru6P) and ammonium ion. This is Glucosamine-6-phosphate deaminase from Latilactobacillus sakei subsp. sakei (strain 23K) (Lactobacillus sakei subsp. sakei).